The chain runs to 466 residues: MKGLVFLLGLLPTIYASLVHITPASEDDFYNPPAGFESAKNGDILKLRNSPNRLASFYFPIDVKNAWQLLVKSEDSFGNPNAFVTTLIEPYNADPSKVVSYQTWEDASNINCSPSYGAQFGSPLSTITTQIDMTLIVPPLRSGYYVVTPDYEGPKATFAVGRQSGQATLDSVRAILKSGSFSGINEDAKVALWGYSGGSLATGWAAALQPVYAPELQKNIVGAAVGGFAANITAIAESVDGTIFAGLITLALNGLANEYPDLKTAFYEELSDFAVPEFKAGAENCLAENIFHYPLHQYFTGPKRAFEKGWGLLKEDIFNKSIQDNLLIGLNKTYLPQVPVLIYHGTVDEIIPIKDPHAQYQLWCDWGIESLEFAEDLSTGHLAETFTGAPAALAWIDARFDGKTPIQGCSHTTRLTNLLYPNTSDSTHSYFLGIYQAVFGTPLGPGINGDNITINSGLLGLVSSII.

The N-terminal stretch at 1–16 (MKGLVFLLGLLPTIYA) is a signal peptide. A disulfide bridge links cysteine 112 with cysteine 285. Serine 196 acts as the Charge relay system in catalysis. N-linked (GlcNAc...) asparagine glycosylation is found at asparagine 231, asparagine 319, and asparagine 331. Active-site charge relay system residues include aspartate 348 and histidine 381. The cysteines at positions 364 and 409 are disulfide-linked. N-linked (GlcNAc...) asparagine glycosylation is found at asparagine 422 and asparagine 451.

Belongs to the AB hydrolase superfamily. Lipase family. Class Lip subfamily.

It localises to the secreted. The enzyme catalyses a triacylglycerol + H2O = a diacylglycerol + a fatty acid + H(+). Its function is as follows. Secreted lipase that is able to hydrolyze both the neutral triacylglycerols and the monopalmitate ester Tween 40, allowing the use of hydrolyzed products as carbon sources. Has broad lipolytic activity, which may be important for colonization and subsequent infection, therefore contributing to the persistence and virulence in human tissue. My be important for alimentary tract colonization, but not oral infection. Facilitates invasive disease via lipid-based suppression of the IL-17 response. Inhibits IL-17 production indirectly by suppressing IL-23 production by tissue-resident dendritic cells. The sequence is that of Lipase 2 from Candida albicans (strain SC5314 / ATCC MYA-2876) (Yeast).